Here is a 159-residue protein sequence, read N- to C-terminus: Transcription elongation factor A protein-like 1 (159 aa).

The disordered stretch occupies residues 1 to 97 (MDKPRKENEE…PPCGVGKHKL (97 aa)). The span at 17-34 (KTDEERPPVEHSPEKQSP) shows a compositional bias: basic and acidic residues. Phosphoserine occurs at positions 28, 33, 38, 39, 43, and 44. A compositionally biased stretch (acidic residues) spans 37-54 (QSSEEQSSEEEFFPEELL). Over residues 64–80 (SEERPPQEGLSRKDLFE) the composition is skewed to basic and acidic residues.

It belongs to the TFS-II family. TFA subfamily. Phosphorylation of Ser-38 and Ser-39 is critical for transcriptional repression. Expressed in all tissues examined. Highly expressed in heart, ovary, prostate and skeletal muscle. Moderately expressed in brain, placenta, testis and small intestine. Weakly expressed in lung, liver and spleen. Expressed in several cancer cell lines.

Its subcellular location is the nucleus. May be involved in transcriptional regulation. Modulates various viral and cellular promoters in a promoter context-dependent manner. For example, transcription from the FOS promoter is increased, while Rous sarcoma virus (RSV) long terminal repeat (LTR) promoter activity is repressed. Does not bind DNA directly. The polypeptide is Transcription elongation factor A protein-like 1 (Homo sapiens (Human)).